Here is a 328-residue protein sequence, read N- to C-terminus: Phosphate acyltransferase (328 aa).

It belongs to the PlsX family. As to quaternary structure, homodimer. Probably interacts with PlsY.

It is found in the cytoplasm. The enzyme catalyses a fatty acyl-[ACP] + phosphate = an acyl phosphate + holo-[ACP]. It functions in the pathway lipid metabolism; phospholipid metabolism. Functionally, catalyzes the reversible formation of acyl-phosphate (acyl-PO(4)) from acyl-[acyl-carrier-protein] (acyl-ACP). This enzyme utilizes acyl-ACP as fatty acyl donor, but not acyl-CoA. In Campylobacter jejuni subsp. jejuni serotype O:2 (strain ATCC 700819 / NCTC 11168), this protein is Phosphate acyltransferase.